The following is a 289-amino-acid chain: Diaminopimelate epimerase (289 aa).

Substrate contacts are provided by N15 and N76. Residue C85 is the Proton donor of the active site. Substrate-binding positions include 86–87 (GN), N158, N191, and 209–210 (ER). C218 (proton acceptor) is an active-site residue. 219–220 (GT) is a binding site for substrate.

It belongs to the diaminopimelate epimerase family. As to quaternary structure, homodimer.

The protein localises to the cytoplasm. The catalysed reaction is (2S,6S)-2,6-diaminopimelate = meso-2,6-diaminopimelate. It participates in amino-acid biosynthesis; L-lysine biosynthesis via DAP pathway; DL-2,6-diaminopimelate from LL-2,6-diaminopimelate: step 1/1. Functionally, catalyzes the stereoinversion of LL-2,6-diaminopimelate (L,L-DAP) to meso-diaminopimelate (meso-DAP), a precursor of L-lysine and an essential component of the bacterial peptidoglycan. The protein is Diaminopimelate epimerase of Streptomyces coelicolor (strain ATCC BAA-471 / A3(2) / M145).